Consider the following 482-residue polypeptide: MARTLRYLLCGILALAAGSNAVPAARGSTRAAPAAEPSTSATTYEAEDAILSGTTVDTAQEGYTGSGYVTGFDEASDKITFEVESEATKLYDLSIRIAAIYGDKHTTVVLNGGASSDVSFPAGDTWVDVPAGQVLLNEGANTIEIVSNWGWYLVDSITLTPSAPRPEHQINRSLNNPSADASARALYDYLRSIYGKKILAGQQDLTWADYVTQQTGKTPALVSVDLMDYSPSRVERGTKGTSVEEAITHAERGGIVSALWHWNAPAGLYDTDEHPWWSGFYTDATDFDVAAALSSTDNANYTLLLRDIDAIAVQLKRLRDARVPVLWRPLHEAEGGWFWWGAKGPDPAKQLYALLYDRLVNHHGINNLIWVWNSLSPDWYPGDDTVDILSADVYAQGNGPMSTQYNQLIDLGKDKKMIAAAEVGAAPLPDLLQAYEAHWLWFAVWGDTFINNAEWNSPEVLKTVYTSDYVLTLDEIQGWQDS.

An N-terminal signal peptide occupies residues 1–21 (MARTLRYLLCGILALAAGSNA). One can recognise a CBM6 domain in the interval 42-160 (TTYEAEDAIL…WYLVDSITLT (119 aa)). N-linked (GlcNAc...) asparagine glycans are attached at residues Asn-171 and Asn-300. Positions 181–474 (ASARALYDYL…YTSDYVLTLD (294 aa)) constitute a GH26 domain. The active-site Proton donor is the Glu-332. Catalysis depends on Glu-422, which acts as the Nucleophile.

Belongs to the glycosyl hydrolase 26 family.

Its subcellular location is the secreted. The activity is completely impaired by Ag(+), partially inhibited by Zn(2+), and enhanced by Co(2+), Ni(2+) and Cu(2+) by 22.6, 14.5 and 20.8 %, respectively. Ca(2+), Na(+), Mg(2+), Mn(2+), urea and EDTA do not significantly affect the mannanase activity. In terms of biological role, mannan endo-1,4-beta-mannosidase that exhibits high activity against konjac glucomannan and carob galactomannan, as well as a lower activity toward beta-mannan. Shows no activity against barley beta-glucan, birchwood xylan, and low viscosity carboxymethyl cellulose (CMC). Has the ability to hydrolyze manno-oligosaccharides such as M4 which is degraded slightly to M3 and M1, M5 which is mainly degraded to M4 and M1, and M6 which is mostly hydrolyzed to M4 and M2. Shows no activity toward M2 and M3 manno-oligosaccharides. The protein is Mannan endo-1,4-beta-mannosidase of Thermothelomyces thermophilus (strain ATCC 42464 / BCRC 31852 / DSM 1799) (Sporotrichum thermophile).